The primary structure comprises 1587 residues: Mediator of RNA polymerase II transcription subunit 23 (1587 aa).

2 disordered regions span residues 1374–1484 (SQSE…QLQH) and 1567–1587 (QHQQ…QQPH). The span at 1385–1404 (PPEKEKSPEKEKEQEQEQHV) shows a compositional bias: basic and acidic residues. Positions 1387-1404 (EKEKSPEKEKEQEQEQHV) are acidic. The span at 1410–1426 (LESTPSVSSLPQMQHHL) shows a compositional bias: polar residues. A compositionally biased stretch (low complexity) spans 1430 to 1450 (PLLPSHQMMPPPQQHSSSLQH). The span at 1463-1484 (DTSQHQTIQQQSNHPTQQQLQH) shows a compositional bias: polar residues. A compositionally biased stretch (low complexity) spans 1567–1576 (QHQQYMQQQQ). Residues 1577-1587 (QHHHQHQQQPH) show a composition bias toward basic residues.

This sequence belongs to the Mediator complex subunit 23 family. As to quaternary structure, component of the Mediator complex. Interacts with let-19/mdt-13.

It is found in the nucleus. Its function is as follows. Component of the Mediator complex, a coactivator involved in regulated gene transcription of nearly all RNA polymerase II-dependent genes. Mediator functions as a bridge to convey information from gene-specific regulatory proteins to the basal RNA polymerase II transcription machinery. Mediator is recruited to promoters by direct interactions with regulatory proteins and serves as a scaffold for the assembly of a functional pre-initiation complex with RNA polymerase II and the general transcription factors. Functions downstream of receptor let-23 and let-60/Ras during vulval induction likely by down-regulating the expression of phosphatase dep-1 and lin-12/Notch in vulva precursor cell descendants with a primary cell fate. Acts to repress beta-catenin target genes. Required for asymmetric division of T-cells. Plays a role in responses to M.nematophilum-mediated bacterial infection by promoting tail swelling and preventing constipation. The polypeptide is Mediator of RNA polymerase II transcription subunit 23 (sur-2) (Caenorhabditis elegans).